The chain runs to 180 residues: Major urinary protein 5 (180 aa).

The signal sequence occupies residues 1 to 18 (MKLLLLLCLELTLVYVHA). An intrachain disulfide couples Cys-82 to Cys-175.

Belongs to the calycin superfamily. Lipocalin family.

The protein localises to the secreted. Its function is as follows. Major urinary proteins (Mups) bind pheromones, and thus stabilize them to allow slow release into the air from urine marks. May protect pheromones from oxidation. May also act as pheromones themselves. In this context, they play a role in the regulation of social behaviors, such as aggression, mating, pup-suckling, territory establishment and dominance. The sequence is that of Major urinary protein 5 from Mus musculus (Mouse).